The chain runs to 63 residues: Small ribosomal subunit protein eS17 (63 aa).

Belongs to the eukaryotic ribosomal protein eS17 family.

This is Small ribosomal subunit protein eS17 from Methanococcus vannielii (strain ATCC 35089 / DSM 1224 / JCM 13029 / OCM 148 / SB).